A 67-amino-acid polypeptide reads, in one-letter code: DNA-directed RNA polymerases I, II, and III subunit RPABC5 (67 aa).

Zn(2+) is bound by residues cysteine 7, cysteine 10, cysteine 44, and cysteine 45.

It belongs to the archaeal Rpo10/eukaryotic RPB10 RNA polymerase subunit family. In terms of assembly, component of the RNA polymerase I (Pol I), RNA polymerase II (Pol II) and RNA polymerase III (Pol III) complexes consisting of at least 13, 12 and 17 subunits, respectively. Pol I complex consists of a ten-subunit catalytic core composed of POLR1A/RPA1, POLR1B/RPA2, POLR1C/RPAC1, POLR1D/RPAC2, POLR1H/RPA12, POLR2E/RPABC1, POLR2F/RPABC2, POLR2H/RPABC3, POLR2K/RPABC4 and POLR2L/RPABC5; a mobile stalk subunit POLR1F/RPA43 protruding from the core and additional subunits homologous to general transcription factors POLR1E/RPA49 and POLR1G/RPA34. Part of Pol I pre-initiation complex (PIC), in which Pol I core assembles with RRN3 and promoter-bound UTBF and SL1/TIF-IB complex. Pol II complex contains a ten-subunit catalytic core composed of POLR2A/RPB1, POLR2B/RPB2, POLR2C/RPB3, POLR2I/RPB9, POLR2J/RPB11, POLR2E/RPABC1, POLR2F/RPABC2, POLR2H/RPABC3, POLR2K/RPABC4 and POLR2L/RPABC5 and a mobile stalk composed of two subunits POLR2D/RPB4 and POLR2G/RPB7. Part of Pol II(G) complex, in which Pol II core associates with an additional subunit POLR2M; unlike conventional Pol II, Pol II(G) functions as a transcriptional repressor. Part of TBP-based Pol II pre-initiation complex (PIC), in which Pol II core assembles with general transcription factors and other specific initiation factors including GTF2E1, GTF2E2, GTF2F1, GTF2F2, TCEA1, ERCC2, ERCC3, GTF2H2, GTF2H3, GTF2H4, GTF2H5, GTF2A1, GTF2A2, GTF2B and TBP; this large multi-subunit PIC complex mediates DNA unwinding and targets Pol II core to the transcription start site where the first phosphodiester bond forms. Pol III complex consists of a ten-subunit catalytic core composed of POLR3A/RPC1, POLR3B/RPC2, POLR1C/RPAC1, POLR1D/RPAC2, POLR3K/RPC10, POLR2E/RPABC1, POLR2F/RPABC2, POLR2H/RPABC3, POLR2K/RPABC4 and POLR2L/RPABC5; a mobile stalk composed of two subunits POLR3H/RPC8 and CRCP/RPC9, protruding from the core and functioning primarily in transcription initiation; and additional subunits homologous to general transcription factors of the RNA polymerase II machinery, POLR3C/RPC3-POLR3F/RPC6-POLR3G/RPC7 heterotrimer required for transcription initiation and POLR3D/RPC4-POLR3E/RPC5 heterodimer involved in both transcription initiation and termination.

It is found in the nucleus. It localises to the nucleolus. In terms of biological role, DNA-dependent RNA polymerase catalyzes the transcription of DNA into RNA using the four ribonucleoside triphosphates as substrates. Common component of RNA polymerases I, II and III which synthesize ribosomal RNA precursors, mRNA precursors and many functional non-coding RNAs, and a small RNAs, such as 5S rRNA and tRNAs, respectively. In Bos taurus (Bovine), this protein is DNA-directed RNA polymerases I, II, and III subunit RPABC5 (POLR2L).